Here is a 602-residue protein sequence, read N- to C-terminus: UvrABC system protein C (602 aa).

In terms of domain architecture, GIY-YIG spans 15–100 (DQSGVYHYFD…IKQLKPKYNI (86 aa)). A UVR domain is found at 206-241 (SKLISRLKERMEKLAENLRFEEAGELRDRIEKIKRI).

This sequence belongs to the UvrC family. As to quaternary structure, interacts with UvrB in an incision complex.

It localises to the cytoplasm. In terms of biological role, the UvrABC repair system catalyzes the recognition and processing of DNA lesions. UvrC both incises the 5' and 3' sides of the lesion. The N-terminal half is responsible for the 3' incision and the C-terminal half is responsible for the 5' incision. In Wolinella succinogenes (strain ATCC 29543 / DSM 1740 / CCUG 13145 / JCM 31913 / LMG 7466 / NCTC 11488 / FDC 602W) (Vibrio succinogenes), this protein is UvrABC system protein C.